We begin with the raw amino-acid sequence, 241 residues long: ATP synthase subunit a (241 aa).

5 helical membrane-spanning segments follow: residues 30-50, 89-109, 128-148, 193-213, and 214-234; these read GQVFLSSWILIGILLAVVLVG, LPFIGTLFLFIFVSNWGGALI, INTTVAMALLVSLAYFYAGLS, LAVGVLVYLVPLIVPLPVMLL, and GLFTSAIQALIFATLASFYIG.

This sequence belongs to the ATPase A chain family. F-type ATPases have 2 components, CF(1) - the catalytic core - and CF(0) - the membrane proton channel. CF(1) has five subunits: alpha(3), beta(3), gamma(1), delta(1), epsilon(1). CF(0) has four main subunits: a, b, b' and c.

The protein localises to the cellular thylakoid membrane. Key component of the proton channel; it plays a direct role in the translocation of protons across the membrane. The sequence is that of ATP synthase subunit a from Synechococcus sp. (strain CC9605).